Here is a 676-residue protein sequence, read N- to C-terminus: Hemin receptor (676 aa).

Positions 1–28 (MLRSTSDRFRWSSLSLAIACTLPLATQA) are cleaved as a signal peptide. The short motif at 44–51 (DTMVVTAT) is the TonB box element. Positions 56–167 (SSFEAPMMVT…LGGVIAYETV (112 aa)) constitute a TBDR plug domain. The region spanning 178-676 (NSGYRVYSSA…NVKFFVSYQW (499 aa)) is the TBDR beta-barrel domain. The TonB C-terminal box signature appears at 659 to 676 (QGIPQDGRNVKFFVSYQW).

This sequence belongs to the TonB-dependent receptor family.

It localises to the cell outer membrane. Its function is as follows. This protein is involved in the initial step of iron uptake by binding hemin, an iron chelatin siderophore that allows the bacteria to extract iron from the environment. The sequence is that of Hemin receptor (hmuR) from Yersinia pestis.